Reading from the N-terminus, the 202-residue chain is ATP-dependent Clp protease proteolytic subunit (202 aa).

Residue Ser101 is the Nucleophile of the active site. His126 is a catalytic residue.

The protein belongs to the peptidase S14 family. Component of the chloroplastic Clp protease core complex.

The protein resides in the plastid. It is found in the chloroplast stroma. The enzyme catalyses Hydrolysis of proteins to small peptides in the presence of ATP and magnesium. alpha-casein is the usual test substrate. In the absence of ATP, only oligopeptides shorter than five residues are hydrolyzed (such as succinyl-Leu-Tyr-|-NHMec, and Leu-Tyr-Leu-|-Tyr-Trp, in which cleavage of the -Tyr-|-Leu- and -Tyr-|-Trp bonds also occurs).. In terms of biological role, cleaves peptides in various proteins in a process that requires ATP hydrolysis. Has a chymotrypsin-like activity. Plays a major role in the degradation of misfolded proteins. The sequence is that of ATP-dependent Clp protease proteolytic subunit from Acorus calamus (Sweet flag).